The sequence spans 74 residues: UPF0435 protein BAA_0470 (74 aa).

Belongs to the UPF0435 family.

In Bacillus anthracis (strain A0248), this protein is UPF0435 protein BAA_0470.